Reading from the N-terminus, the 256-residue chain is Type III pantothenate kinase (256 aa).

6–13 (DVGNTNTV) is a binding site for ATP. Substrate is bound by residues tyrosine 100 and 107–110 (GADR). Aspartate 109 serves as the catalytic Proton acceptor. Aspartate 129 contributes to the K(+) binding site. Threonine 132 provides a ligand contact to ATP. Threonine 184 is a binding site for substrate.

The protein belongs to the type III pantothenate kinase family. Homodimer. It depends on NH4(+) as a cofactor. K(+) is required as a cofactor.

It localises to the cytoplasm. The catalysed reaction is (R)-pantothenate + ATP = (R)-4'-phosphopantothenate + ADP + H(+). Its pathway is cofactor biosynthesis; coenzyme A biosynthesis; CoA from (R)-pantothenate: step 1/5. In terms of biological role, catalyzes the phosphorylation of pantothenate (Pan), the first step in CoA biosynthesis. The sequence is that of Type III pantothenate kinase from Myxococcus xanthus (strain DK1622).